The following is a 259-amino-acid chain: MWFPILTWLVATAVALDCSAKDLDSYNFALLQGTHAVESVKDTPPSTTKTTWYFGICESVSSKKAPACPKNVDICGVTEVKVDKDYIVTQVVGFNSNLEKKYTPVESKNENGIKISYKGANWGSSLVNAEVYYICAEDKDGDDTFTVESWDDEMLFAQVKSKAACVTSKDDKKKPKKPEDNGESWGWFTWIFIFMVLFLSIYIIGGAWFQYNKGNAIDFQSALREVLENFVDLVRGLPSFIREIIEKVTGSNRGEYSAV.

Residues 1–15 (MWFPILTWLVATAVA) form the signal peptide. The MRH domain maps to 16–167 (LDCSAKDLDS…QVKSKAACVT (152 aa)). The Lumenal portion of the chain corresponds to 16–184 (LDCSAKDLDS…PKKPEDNGES (169 aa)). 3 disulfide bridges follow: Cys18–Cys57, Cys68–Cys75, and Cys135–Cys165. Residues 185 to 205 (WGWFTWIFIFMVLFLSIYIIG) traverse the membrane as a helical segment. The Cytoplasmic segment spans residues 206 to 259 (GAWFQYNKGNAIDFQSALREVLENFVDLVRGLPSFIREIIEKVTGSNRGEYSAV).

Belongs to the ATG27 family.

It localises to the cytoplasmic vesicle membrane. The protein resides in the golgi apparatus membrane. It is found in the mitochondrion membrane. The protein localises to the preautophagosomal structure membrane. Functionally, effector of VPS34 phosphatidylinositol 3-phosphate kinase signaling. Regulates the cytoplasm to vacuole transport (Cvt) vesicle formation. Plays a role in ATG protein retrieval from the pre-autophagosomal structure (PAS) and is especially required for autophagy-dependent cycling of ATG9. The polypeptide is Autophagy-related protein 27 (ATG27) (Meyerozyma guilliermondii (strain ATCC 6260 / CBS 566 / DSM 6381 / JCM 1539 / NBRC 10279 / NRRL Y-324) (Yeast)).